A 333-amino-acid chain; its full sequence is Lipoyl synthase (333 aa).

Residues C56, C61, C67, C82, C86, C89, and S293 each coordinate [4Fe-4S] cluster. The 215-residue stretch at 68–282 (WEDREATFLI…GRVGAELGFS (215 aa)) folds into the Radical SAM core domain. The tract at residues 301 to 333 (QQAMTARDQDRSEMSVPPESVSENSHGQRPSPW) is disordered. Positions 314 to 325 (MSVPPESVSENS) are enriched in low complexity.

Belongs to the radical SAM superfamily. Lipoyl synthase family. It depends on [4Fe-4S] cluster as a cofactor.

The protein localises to the cytoplasm. The catalysed reaction is [[Fe-S] cluster scaffold protein carrying a second [4Fe-4S](2+) cluster] + N(6)-octanoyl-L-lysyl-[protein] + 2 oxidized [2Fe-2S]-[ferredoxin] + 2 S-adenosyl-L-methionine + 4 H(+) = [[Fe-S] cluster scaffold protein] + N(6)-[(R)-dihydrolipoyl]-L-lysyl-[protein] + 4 Fe(3+) + 2 hydrogen sulfide + 2 5'-deoxyadenosine + 2 L-methionine + 2 reduced [2Fe-2S]-[ferredoxin]. The protein operates within protein modification; protein lipoylation via endogenous pathway; protein N(6)-(lipoyl)lysine from octanoyl-[acyl-carrier-protein]: step 2/2. Its function is as follows. Catalyzes the radical-mediated insertion of two sulfur atoms into the C-6 and C-8 positions of the octanoyl moiety bound to the lipoyl domains of lipoate-dependent enzymes, thereby converting the octanoylated domains into lipoylated derivatives. The sequence is that of Lipoyl synthase from Frankia casuarinae (strain DSM 45818 / CECT 9043 / HFP020203 / CcI3).